Consider the following 394-residue polypeptide: Probable peptidoglycan glycosyltransferase FtsW (394 aa).

The Cytoplasmic segment spans residues Met-1 to Gln-27. Residues Leu-28–Ile-48 form a helical membrane-spanning segment. Over Pro-49–Arg-64 the chain is Periplasmic. A helical transmembrane segment spans residues His-65 to Ala-85. Topologically, residues Arg-86–Gln-88 are cytoplasmic. The helical transmembrane segment at His-89–Gly-109 threads the bilayer. The Periplasmic portion of the chain corresponds to Arg-110–Pro-123. Residues Phe-124 to Leu-144 form a helical membrane-spanning segment. At Val-145–Arg-154 the chain is on the cytoplasmic side. A helical transmembrane segment spans residues Phe-155 to Gln-175. Residue Pro-176 is a topological domain, periplasmic. The helical transmembrane segment at Asp-177 to Ala-197 threads the bilayer. Arg-198 is a topological domain (cytoplasmic). Residues Leu-199 to Ala-219 form a helical membrane-spanning segment. Residues Glu-220–Val-279 lie on the Periplasmic side of the membrane. The helical transmembrane segment at Phe-280–Phe-300 threads the bilayer. The Cytoplasmic segment spans residues Ala-301–Gly-322. The chain crosses the membrane as a helical span at residues Tyr-323 to Ala-343. Topologically, residues Ser-344–Leu-354 are periplasmic. Residues Pro-355–Val-375 traverse the membrane as a helical segment. Topologically, residues Arg-376 to Ser-394 are cytoplasmic.

Belongs to the SEDS family. FtsW subfamily.

The protein resides in the cell inner membrane. It catalyses the reaction [GlcNAc-(1-&gt;4)-Mur2Ac(oyl-L-Ala-gamma-D-Glu-L-Lys-D-Ala-D-Ala)](n)-di-trans,octa-cis-undecaprenyl diphosphate + beta-D-GlcNAc-(1-&gt;4)-Mur2Ac(oyl-L-Ala-gamma-D-Glu-L-Lys-D-Ala-D-Ala)-di-trans,octa-cis-undecaprenyl diphosphate = [GlcNAc-(1-&gt;4)-Mur2Ac(oyl-L-Ala-gamma-D-Glu-L-Lys-D-Ala-D-Ala)](n+1)-di-trans,octa-cis-undecaprenyl diphosphate + di-trans,octa-cis-undecaprenyl diphosphate + H(+). It functions in the pathway cell wall biogenesis; peptidoglycan biosynthesis. Peptidoglycan polymerase that is essential for cell division. This is Probable peptidoglycan glycosyltransferase FtsW from Aeromonas salmonicida (strain A449).